A 224-amino-acid chain; its full sequence is 2-C-methyl-D-erythritol 4-phosphate cytidylyltransferase (224 aa).

Belongs to the IspD/TarI cytidylyltransferase family. IspD subfamily.

It carries out the reaction 2-C-methyl-D-erythritol 4-phosphate + CTP + H(+) = 4-CDP-2-C-methyl-D-erythritol + diphosphate. Its pathway is isoprenoid biosynthesis; isopentenyl diphosphate biosynthesis via DXP pathway; isopentenyl diphosphate from 1-deoxy-D-xylulose 5-phosphate: step 2/6. In terms of biological role, catalyzes the formation of 4-diphosphocytidyl-2-C-methyl-D-erythritol from CTP and 2-C-methyl-D-erythritol 4-phosphate (MEP). The chain is 2-C-methyl-D-erythritol 4-phosphate cytidylyltransferase from Clostridium botulinum (strain Eklund 17B / Type B).